Reading from the N-terminus, the 237-residue chain is 7-cyano-7-deazaguanine synthase (237 aa).

Position 14–24 (14–24 (FSGGQDSATCL)) interacts with ATP. The Zn(2+) site is built by Cys202, Cys217, Cys220, and Cys223.

The protein belongs to the QueC family. It depends on Zn(2+) as a cofactor.

It catalyses the reaction 7-carboxy-7-deazaguanine + NH4(+) + ATP = 7-cyano-7-deazaguanine + ADP + phosphate + H2O + H(+). It functions in the pathway purine metabolism; 7-cyano-7-deazaguanine biosynthesis. In terms of biological role, catalyzes the ATP-dependent conversion of 7-carboxy-7-deazaguanine (CDG) to 7-cyano-7-deazaguanine (preQ(0)). The protein is 7-cyano-7-deazaguanine synthase of Rhodopseudomonas palustris (strain TIE-1).